We begin with the raw amino-acid sequence, 274 residues long: Ribosomal RNA small subunit methyltransferase A (274 aa).

The S-adenosyl-L-methionine site is built by Asn-28, Leu-30, Gly-55, Glu-77, Asp-103, and Asn-122.

The protein belongs to the class I-like SAM-binding methyltransferase superfamily. rRNA adenine N(6)-methyltransferase family. RsmA subfamily.

It localises to the cytoplasm. The catalysed reaction is adenosine(1518)/adenosine(1519) in 16S rRNA + 4 S-adenosyl-L-methionine = N(6)-dimethyladenosine(1518)/N(6)-dimethyladenosine(1519) in 16S rRNA + 4 S-adenosyl-L-homocysteine + 4 H(+). In terms of biological role, specifically dimethylates two adjacent adenosines (A1518 and A1519) in the loop of a conserved hairpin near the 3'-end of 16S rRNA in the 30S particle. May play a critical role in biogenesis of 30S subunits. The polypeptide is Ribosomal RNA small subunit methyltransferase A (Rhizobium meliloti (strain 1021) (Ensifer meliloti)).